Consider the following 285-residue polypeptide: Ribosomal protein L11 methyltransferase (285 aa).

Positions 131, 154, 176, and 223 each coordinate S-adenosyl-L-methionine.

Belongs to the methyltransferase superfamily. PrmA family.

It localises to the cytoplasm. The enzyme catalyses L-lysyl-[protein] + 3 S-adenosyl-L-methionine = N(6),N(6),N(6)-trimethyl-L-lysyl-[protein] + 3 S-adenosyl-L-homocysteine + 3 H(+). Methylates ribosomal protein L11. In Brucella suis (strain ATCC 23445 / NCTC 10510), this protein is Ribosomal protein L11 methyltransferase.